Reading from the N-terminus, the 216-residue chain is Somatotropin (216 aa).

The first 25 residues, 1–25 (MAPGSWFSPLLIAVVTLGLPQGAAA), serve as a signal peptide directing secretion. Histidine 45 is a Zn(2+) binding site. A disulfide bridge connects residues cysteine 78 and cysteine 189. Zn(2+) is bound at residue glutamate 198. A disulfide bond links cysteine 206 and cysteine 214.

It belongs to the somatotropin/prolactin family. In terms of tissue distribution, pituitary gland.

It is found in the secreted. Growth hormone plays an important role in growth control. This Meleagris gallopavo (Wild turkey) protein is Somatotropin (GH).